The primary structure comprises 244 residues: 7-cyano-7-deazaguanine synthase (244 aa).

14-24 (FSGGQDSATCV) serves as a coordination point for ATP. Zn(2+) is bound by residues C202, C217, C220, and C223.

This sequence belongs to the QueC family. Zn(2+) serves as cofactor.

It carries out the reaction 7-carboxy-7-deazaguanine + NH4(+) + ATP = 7-cyano-7-deazaguanine + ADP + phosphate + H2O + H(+). The protein operates within purine metabolism; 7-cyano-7-deazaguanine biosynthesis. In terms of biological role, catalyzes the ATP-dependent conversion of 7-carboxy-7-deazaguanine (CDG) to 7-cyano-7-deazaguanine (preQ(0)). The polypeptide is 7-cyano-7-deazaguanine synthase (Burkholderia cenocepacia (strain ATCC BAA-245 / DSM 16553 / LMG 16656 / NCTC 13227 / J2315 / CF5610) (Burkholderia cepacia (strain J2315))).